Reading from the N-terminus, the 400-residue chain is Subtilisin-like protease 11 (400 aa).

Residues 1 to 19 (MGLFKVIFTAVAALSAVDA) form the signal peptide. The propeptide occupies 20–117 (AELLSSAKSK…VEHDRHVYIS (98 aa)). The Inhibitor I9 domain maps to 35-116 (SYLVVMKDSV…FVEHDRHVYI (82 aa)). One can recognise a Peptidase S8 domain in the interval 127–400 (SWGLGRVSHR…NKLLYNRSGK (274 aa)). N-linked (GlcNAc...) asparagine glycosylation is present at Asn138. Asp159 (charge relay system) is an active-site residue. N-linked (GlcNAc...) asparagine glycosylation occurs at Asn181. Residue His191 is the Charge relay system of the active site. 2 N-linked (GlcNAc...) asparagine glycosylation sites follow: Asn252 and Asn337. Ser346 (charge relay system) is an active-site residue. N-linked (GlcNAc...) asparagine glycans are attached at residues Asn388 and Asn396.

Belongs to the peptidase S8 family.

The protein resides in the secreted. Functionally, secreted subtilisin-like serine protease with keratinolytic activity that contributes to pathogenicity. This is Subtilisin-like protease 11 (SUB11) from Trichophyton verrucosum (strain HKI 0517).